The following is a 255-amino-acid chain: Cytochrome c oxidase subunit 3 (255 aa).

7 helical membrane-spanning segments follow: residues 12 to 29, 57 to 77, 91 to 111, 126 to 146, 155 to 175, 196 to 216, and 235 to 255; these read INIINISETLYLFYSTGL, LKYLSVGEFFINSLTIFINGI, IFGMFIFSEIMVFSTFIWGFF, LEAFLQISDVLNAGSILISLI, YFEVDYMLERLILIGFIFLSF, FNVLTGLHSLHVYVGGIFALM, and GMYWHFVEIIWIALTMLLFLL.

The protein belongs to the cytochrome c oxidase subunit 3 family. In terms of assembly, component of the cytochrome c oxidase (complex IV, CIV), a multisubunit enzyme composed of a catalytic core of 3 subunits and several supernumerary subunits. The complex exists as a monomer or a dimer and forms supercomplexes (SCs) in the inner mitochondrial membrane with ubiquinol-cytochrome c oxidoreductase (cytochrome b-c1 complex, complex III, CIII).

Its subcellular location is the mitochondrion inner membrane. It carries out the reaction 4 Fe(II)-[cytochrome c] + O2 + 8 H(+)(in) = 4 Fe(III)-[cytochrome c] + 2 H2O + 4 H(+)(out). In terms of biological role, component of the cytochrome c oxidase, the last enzyme in the mitochondrial electron transport chain which drives oxidative phosphorylation. The respiratory chain contains 3 multisubunit complexes succinate dehydrogenase (complex II, CII), ubiquinol-cytochrome c oxidoreductase (cytochrome b-c1 complex, complex III, CIII) and cytochrome c oxidase (complex IV, CIV), that cooperate to transfer electrons derived from NADH and succinate to molecular oxygen, creating an electrochemical gradient over the inner membrane that drives transmembrane transport and the ATP synthase. Cytochrome c oxidase is the component of the respiratory chain that catalyzes the reduction of oxygen to water. Electrons originating from reduced cytochrome c in the intermembrane space (IMS) are transferred via the dinuclear copper A center (CU(A)) of subunit 2 and heme A of subunit 1 to the active site in subunit 1, a binuclear center (BNC) formed by heme A3 and copper B (CU(B)). The BNC reduces molecular oxygen to 2 water molecules using 4 electrons from cytochrome c in the IMS and 4 protons from the mitochondrial matrix. The sequence is that of Cytochrome c oxidase subunit 3 (MT-CO3) from Theileria annulata.